The chain runs to 381 residues: Chaperone protein DnaJ (381 aa).

Positions 5–70 (DFYEVLGVSR…QKKAAYDQYG (66 aa)) constitute a J domain. The CR-type zinc finger occupies 136–214 (GVTKEIEVPT…CHGQGRKQKT (79 aa)). Residues Cys149, Cys152, Cys166, Cys169, Cys188, Cys191, Cys202, and Cys205 each coordinate Zn(2+). 4 CXXCXGXG motif repeats span residues 149–156 (CDSCDGSG), 166–173 (CGTCHGHG), 188–195 (CPTCHGKG), and 202–209 (CNECHGQG).

It belongs to the DnaJ family. As to quaternary structure, homodimer. Requires Zn(2+) as cofactor.

The protein resides in the cytoplasm. In terms of biological role, participates actively in the response to hyperosmotic and heat shock by preventing the aggregation of stress-denatured proteins and by disaggregating proteins, also in an autonomous, DnaK-independent fashion. Unfolded proteins bind initially to DnaJ; upon interaction with the DnaJ-bound protein, DnaK hydrolyzes its bound ATP, resulting in the formation of a stable complex. GrpE releases ADP from DnaK; ATP binding to DnaK triggers the release of the substrate protein, thus completing the reaction cycle. Several rounds of ATP-dependent interactions between DnaJ, DnaK and GrpE are required for fully efficient folding. Also involved, together with DnaK and GrpE, in the DNA replication of plasmids through activation of initiation proteins. The polypeptide is Chaperone protein DnaJ (Vibrio parahaemolyticus serotype O3:K6 (strain RIMD 2210633)).